Consider the following 272-residue polypeptide: Orotidine 5'-phosphate decarboxylase (272 aa).

Catalysis depends on K92, which acts as the Proton donor.

This sequence belongs to the OMP decarboxylase family. Type 2 subfamily.

It catalyses the reaction orotidine 5'-phosphate + H(+) = UMP + CO2. The protein operates within pyrimidine metabolism; UMP biosynthesis via de novo pathway; UMP from orotate: step 2/2. This Deinococcus radiodurans (strain ATCC 13939 / DSM 20539 / JCM 16871 / CCUG 27074 / LMG 4051 / NBRC 15346 / NCIMB 9279 / VKM B-1422 / R1) protein is Orotidine 5'-phosphate decarboxylase (pyrF).